Reading from the N-terminus, the 170-residue chain is Chorion protein S18 (170 aa).

The N-terminal stretch at 1–17 (MMKFMCIFVCAIAAVSA) is a signal peptide. Low complexity predominate over residues 146–159 (AAAASSSVAGQHSG). The interval 146–170 (AAAASSSVAGQHSGYKNSGYKNSSY) is disordered. Polar residues predominate over residues 160-170 (YKNSGYKNSSY).

Belongs to the chorion protein S15/S18 family.

It localises to the secreted. Functionally, chorion membrane (egg shell) protein; plays a role in protecting the egg from the environment. This is Chorion protein S18 (Cp18) from Drosophila virilis (Fruit fly).